Consider the following 521-residue polypeptide: Alkyl hydroperoxide reductase subunit F (521 aa).

213–228 provides a ligand contact to FAD; the sequence is DVLVVGGGPAGAAAAI. Cys-344 and Cys-347 are oxidised to a cystine. Residue 356–370 coordinates NAD(+); it reads RVAVIGGGNSGVEAA. 477 to 487 is an FAD binding site; it reads TSLPGIFAAGD.

Belongs to the class-II pyridine nucleotide-disulfide oxidoreductase family. Homodimer. Requires FAD as cofactor.

Its function is as follows. Serves to protect the cell against DNA damage by alkyl hydroperoxides. It can use either NADH or NADPH as electron donor for direct reduction of redox dyes or of alkyl hydroperoxides when combined with the AhpC protein. This is Alkyl hydroperoxide reductase subunit F (ahpF) from Pseudomonas aeruginosa (strain ATCC 15692 / DSM 22644 / CIP 104116 / JCM 14847 / LMG 12228 / 1C / PRS 101 / PAO1).